The primary structure comprises 203 residues: MANLLIVKAHPLDAQKSYALRALEEFQTRYASLHPEDRIEIVDVFEDQIPALDKPLLEAMGAAKRGEAISPEQAEQLGRYNALTQQFLAADKIVVVNPLWNLNVPSQLVSWINTINVAGLTFKYGPEGSIGLVKGKKLLHIQSNGGVYAGQDPAAQYIKSIFEFLGFEDIHQVFIEGQSADPSQSQVIFEEAMAKIDQILESY.

Position 143-146 (143-146) interacts with FMN; sequence SNGG.

This sequence belongs to the azoreductase type 1 family. In terms of assembly, homodimer. It depends on FMN as a cofactor.

The enzyme catalyses 2 a quinone + NADH + H(+) = 2 a 1,4-benzosemiquinone + NAD(+). It catalyses the reaction N,N-dimethyl-1,4-phenylenediamine + anthranilate + 2 NAD(+) = 2-(4-dimethylaminophenyl)diazenylbenzoate + 2 NADH + 2 H(+). In terms of biological role, quinone reductase that provides resistance to thiol-specific stress caused by electrophilic quinones. Also exhibits azoreductase activity. Catalyzes the reductive cleavage of the azo bond in aromatic azo compounds to the corresponding amines. This chain is FMN-dependent NADH:quinone oxidoreductase, found in Streptococcus suis (strain 98HAH33).